A 188-amino-acid polypeptide reads, in one-letter code: Peptidyl-tRNA hydrolase (188 aa).

Tyr-18 lines the tRNA pocket. The Proton acceptor role is filled by His-23. TRNA-binding residues include Tyr-67, Asn-69, and Asn-115.

It belongs to the PTH family. Monomer.

Its subcellular location is the cytoplasm. It carries out the reaction an N-acyl-L-alpha-aminoacyl-tRNA + H2O = an N-acyl-L-amino acid + a tRNA + H(+). In terms of biological role, hydrolyzes ribosome-free peptidyl-tRNAs (with 1 or more amino acids incorporated), which drop off the ribosome during protein synthesis, or as a result of ribosome stalling. Its function is as follows. Catalyzes the release of premature peptidyl moieties from peptidyl-tRNA molecules trapped in stalled 50S ribosomal subunits, and thus maintains levels of free tRNAs and 50S ribosomes. The chain is Peptidyl-tRNA hydrolase from Salinibacter ruber (strain DSM 13855 / M31).